We begin with the raw amino-acid sequence, 875 residues long: Phospholipase DDHD1 (875 aa).

Disordered stretches follow at residues 1–30 (MNYP…LGSD), 101–153 (LRYY…GAAA), and 206–231 (RAQD…SVED). A phosphoserine mark is found at Ser-8 and Ser-11. Residues 130–140 (SGGGGAAGGGP) are compositionally biased toward gly residues. Positions 217-228 (GPASPAGPASSS) are enriched in low complexity. Ser-540 is an active-site residue. The DDHD domain maps to 614 to 861 (LKFKVENFFC…ALFLLTFMYK (248 aa)). Position 726 is a phosphoserine (Ser-726). A disordered region spans residues 770–804 (RSSASQPSETSRDSIEDEKKPVASPPMTTVATQTL). Residues 779-790 (TSRDSIEDEKKP) show a composition bias toward basic and acidic residues. A compositionally biased stretch (polar residues) spans 795 to 804 (PMTTVATQTL).

The protein belongs to the PA-PLA1 family. As to quaternary structure, forms homooligomers and, to a much smaller extent, heterooligomers with DDHD2. Interacts with SEC23A and SEC24C. Expressed in mature testis.

Its subcellular location is the cytoplasm. It carries out the reaction a 1,2-diacyl-sn-glycero-3-phosphate + H2O = a 2-acyl-sn-glycerol 3-phosphate + a fatty acid + H(+). The enzyme catalyses a 1,2-diacyl-sn-glycero-3-phospho-(1D-myo-inositol) + H2O = a 2-acyl-sn-glycero-3-phospho-D-myo-inositol + a fatty acid + H(+). It catalyses the reaction 1-octadecanoyl-2-(5Z,8Z,11Z,14Z-eicosatetraenoyl)-sn-glycero-3-phospho-(1D-myo-inositol) + H2O = 2-(5Z,8Z,11Z,14Z-eicosatetraenoyl)-sn-glycero-3-phospho-(1D-myo-inositol) + octadecanoate + H(+). The catalysed reaction is a 1-acyl-2-(5Z,8Z,11Z,14Z-eicosatetraenoyl)-sn-glycero-3-phospho-(1D-myo-inositol) + H2O = 2-(5Z,8Z,11Z,14Z-eicosatetraenoyl)-sn-glycero-3-phospho-(1D-myo-inositol) + a fatty acid + H(+). It carries out the reaction 1,2-dihexadecanoyl-sn-glycero-3-phospho-(1D-myo-inositol) + H2O = 2-hexadecanoyl-sn-glycero-3-phospho-(1D-myo-inositol) + hexadecanoate + H(+). The enzyme catalyses 1,2-di-(9Z-octadecenoyl)-sn-glycero-3-phosphate + H2O = 2-(9Z-octadecenoyl)-sn-glycero-3-phosphate + (9Z)-octadecenoate + H(+). It catalyses the reaction a 1-acyl-2-(5Z,8Z,11Z,14Z)-eicosatetraenoyl-sn-glycero-3-phosphate + H2O = 2-(5Z,8Z,11Z,14Z-eicosatetraenoyl)-sn-glycero-3-phosphate + a fatty acid + H(+). The catalysed reaction is 1-hexadecanoyl-2-(9Z-octadecenoyl)-sn-glycero-3-phosphate + H2O = 2-(9Z-octadecenoyl)-sn-glycero-3-phosphate + hexadecanoate + H(+). It carries out the reaction 1-hexadecanoyl-2-(9Z-octadecenoyl)-sn-glycero-3-phospho-L-serine + H2O = 2-(9Z-octadecenoyl)-sn-glycero-3-phospho-L-serine + hexadecanoate + H(+). The enzyme catalyses 1,2-di-(5Z,8Z,11Z,14Z)-eicosatetraenoyl-sn-glycero-3-phosphate + H2O = 2-(5Z,8Z,11Z,14Z-eicosatetraenoyl)-sn-glycero-3-phosphate + (5Z,8Z,11Z,14Z)-eicosatetraenoate + H(+). It catalyses the reaction 1-octadecanoyl-2-(5Z,8Z,11Z,14Z-eicosatetraenoyl)-sn-glycero-3-phosphate + H2O = 2-(5Z,8Z,11Z,14Z-eicosatetraenoyl)-sn-glycero-3-phosphate + octadecanoate + H(+). The catalysed reaction is a 1,2-diacyl-sn-glycero-3-phosphocholine + H2O = a 2-acyl-sn-glycero-3-phosphocholine + a fatty acid + H(+). It carries out the reaction a 1,2-diacyl-sn-glycero-3-phosphoethanolamine + H2O = a 2-acyl-sn-glycero-3-phosphoethanolamine + a fatty acid + H(+). The enzyme catalyses a 1,2-diacyl-sn-glycero-3-phospho-L-serine + H2O = a 2-acyl-sn-glycero-3-phospho-L-serine + a fatty acid + H(+). It catalyses the reaction a 1,2-diacyl-sn-glycero-3-phospho-(1'-sn-glycerol) + H2O = 2-acyl-sn-glycero-3-phospho-(1'-sn-glycerol) + a fatty acid + H(+). The catalysed reaction is 1-hexadecanoyl-2-(9Z-octadecenoyl)-sn-glycero-3-phospho-(1'-sn-glycerol) + H2O = 2-(9Z-octadecenoyl)-sn-glycero-3-phospho-(1'-sn-glycerol) + hexadecanoate + H(+). It carries out the reaction 1-acyl-2-(5Z,8Z,11Z,14Z-eicosatetraenoyl)-sn-glycero-3-phosphocholine + H2O = 2-(5Z,8Z,11Z,14Z)-eicosatetraenoyl-sn-glycero-3-phosphocholine + a fatty acid + H(+). The enzyme catalyses 1-acyl-2-(5Z,8Z,11Z,14Z)-eicosatetraenoyl-sn-glycero-3-phosphoethanolamine + H2O = 2-(5Z,8Z,11Z,14Z)-eicosatetraenoyl-sn-glycero-3-phosphoethanolamine + a fatty acid + H(+). It catalyses the reaction 1-(9Z-octadecenoyl)-2-(7Z,10Z,13Z,16Z,19Z-docosapentaenoyl)-sn-glycero-3-phospho-1D-myo-inositol + H2O = 2-(7Z,10Z,13Z,16Z,19Z-docosapentaenoyl)-sn-glycero-3-phospho-1D-myo-inositol + (9Z)-octadecenoate + H(+). The catalysed reaction is 1-(9Z-octadecenoyl)-2-(5Z,8Z,11Z,14Z-eicosatetraenoyl)-sn-glycero-3-phospho-1D-myo-inositol + H2O = 2-(5Z,8Z,11Z,14Z-eicosatetraenoyl)-sn-glycero-3-phospho-(1D-myo-inositol) + (9Z)-octadecenoate + H(+). It carries out the reaction 1,2-di-(9Z-octadecenoyl)-sn-glycero-3-phospho-1D-myo-inositol + H2O = 2-(9Z-octadecenoyl)-sn-glycero-3-phospho-1D-myo-inositol + (9Z)-octadecenoate + H(+). The enzyme catalyses 1-(9Z-octadecenoyl)-2-(8Z,11Z,14Z-eicosatrienoyl)-sn-glycero-3-phospho-1D-myo-inositol + H2O = 2-(8Z,11Z,14Z-eicosatrienoyl)-sn-glycero-3-phospho-1D-myo-inositol + (9Z)-octadecenoate + H(+). It catalyses the reaction 1,2-di-(9Z-octadecenoyl)-sn-glycero-3-phosphocholine + H2O = (9Z-octadecenoyl)-sn-glycero-3-phosphocholine + (9Z)-octadecenoate + H(+). The protein operates within phospholipid metabolism; phosphatidylinositol metabolism. Functionally, phospholipase A1 (PLA1) that hydrolyzes ester bonds at the sn-1 position of glycerophospholipids producing a free fatty acid and a lysophospholipid. Prefers phosphatidate (1,2-diacyl-sn-glycero-3-phosphate, PA) as substrate in vitro, but can efficiently hydrolyze phosphatidylinositol (1,2-diacyl-sn-glycero-3-phospho-(1D-myo-inositol), PI), as well as a range of other glycerophospholipid substrates such as phosphatidylcholine (1,2-diacyl-sn-glycero-3-phosphocholine, PC), phosphatidylethanolamine (1,2-diacyl-sn-glycero-3-phosphoethanolamine, PE), phosphatidylserine (1,2-diacyl-sn-glycero-3-phospho-L-serine, PS) and phosphatidylglycerol (1,2-diacyl-sn-glycero-3-phospho-(1'-sn-glycerol), PG). Involved in the regulation of the endogenous content of polyunsaturated PI and PS lipids in the nervous system. Changes in these lipids extend to downstream metabolic products like PI phosphates PIP and PIP2, which play fundamental roles in cell biology. Regulates mitochondrial morphology. These dynamic changes may be due to PA hydrolysis at the mitochondrial surface. May play a regulatory role in spermatogenesis or sperm function. This Bos taurus (Bovine) protein is Phospholipase DDHD1 (DDHD1).